The chain runs to 710 residues: Polyribonucleotide nucleotidyltransferase (710 aa).

Positions 489 and 495 each coordinate Mg(2+). The region spanning 556–615 is the KH domain; it reads PKIDTIKIDVDKIKVVIGKGGETIDKIIAETGVKIDIDDEGNVSIYSSDQAAIDRTKEII. In terms of domain architecture, S1 motif spans 625 to 693; that stretch reads GEVYHAKVVR…EKGRVDASMK (69 aa). The segment at 691–710 is disordered; that stretch reads SMKALIPRPPKPEKKEEKHD. Residues 700–710 are compositionally biased toward basic and acidic residues; that stretch reads PKPEKKEEKHD.

The protein belongs to the polyribonucleotide nucleotidyltransferase family. Mg(2+) is required as a cofactor.

It is found in the cytoplasm. It catalyses the reaction RNA(n+1) + phosphate = RNA(n) + a ribonucleoside 5'-diphosphate. In terms of biological role, involved in mRNA degradation. Catalyzes the phosphorolysis of single-stranded polyribonucleotides processively in the 3'- to 5'-direction. In Streptococcus pyogenes serotype M49 (strain NZ131), this protein is Polyribonucleotide nucleotidyltransferase.